Consider the following 238-residue polypeptide: MSKIPVLEIFGPTIQGEGMVVGQKTMFIRTAGCDYSCAWCDSAFTWDGSAKDQIRQMTPEDIWDELVAIGGENFSHVTISGGNPALLKNIEFLLSILKENGMRTAIETQGSKWQDWLLQIDEITISPKPPSSTMKTDFQRLDAIIQKLAGKDISLKVVVFDDHDFEYAVKMHERYPKVPFFLQVGNDDTKTVDDAMLIKKLLDKYEWLIDKAVNCKEMNDAKVLPQLHALVWGNKRGV.

Residues 14–16 (IQG) and R29 each bind substrate. Residues 20 to 234 (VVGQKTMFIR…PQLHALVWGN (215 aa)) enclose the Radical SAM core domain. Positions 33, 37, and 40 each coordinate [4Fe-4S] cluster. A Mg(2+)-binding site is contributed by S42. Residue S80 coordinates substrate. S-adenosyl-L-methionine contacts are provided by residues G82 and 126–128 (SPK).

This sequence belongs to the radical SAM superfamily. 7-carboxy-7-deazaguanine synthase family. As to quaternary structure, homodimer. [4Fe-4S] cluster serves as cofactor. The cofactor is S-adenosyl-L-methionine. Mg(2+) is required as a cofactor.

The enzyme catalyses 6-carboxy-5,6,7,8-tetrahydropterin + H(+) = 7-carboxy-7-deazaguanine + NH4(+). It functions in the pathway purine metabolism; 7-cyano-7-deazaguanine biosynthesis. Functionally, catalyzes the complex heterocyclic radical-mediated conversion of 6-carboxy-5,6,7,8-tetrahydropterin (CPH4) to 7-carboxy-7-deazaguanine (CDG), a step common to the biosynthetic pathways of all 7-deazapurine-containing compounds. In Bacillus cereus (strain ATCC 14579 / DSM 31 / CCUG 7414 / JCM 2152 / NBRC 15305 / NCIMB 9373 / NCTC 2599 / NRRL B-3711), this protein is 7-carboxy-7-deazaguanine synthase.